Here is a 563-residue protein sequence, read N- to C-terminus: Zinc finger protein 503 (563 aa).

A compositionally biased stretch (polar residues) spans 1–10 (MITSPSASRN). 2 disordered regions span residues 1–48 (MITS…PLRQ) and 101–226 (SQIG…TSVS). 2 stretches are compositionally biased toward low complexity: residues 19–33 (SSSS…AVAS) and 112–122 (SKLSSVTSNGS). Positions 174-194 (ATCQPFTPRTGSPNSSTSASP) are enriched in polar residues. The segment covering 199 to 211 (GKGERDEKKDSDC) has biased composition (basic and acidic residues). Polar residues predominate over residues 212–226 (NKNCSSDGSAPTSVS). The C2H2-type zinc-finger motif lies at 431–459 (HVCNWVSANGPCDKRFSSSEELLNHLRTH).

Belongs to the Elbow/Noc family. In terms of assembly, interacts with nlz1.

The protein localises to the nucleus. Required for segmental gene expression during hindbrain development. May function as a transcriptional repressor. This Danio rerio (Zebrafish) protein is Zinc finger protein 503 (znf503).